We begin with the raw amino-acid sequence, 293 residues long: Ethanolamine ammonia-lyase small subunit (293 aa).

Val207 and Glu228 together coordinate adenosylcob(III)alamin.

This sequence belongs to the EutC family. The basic unit is a heterodimer which dimerizes to form tetramers. The heterotetramers trimerize; 6 large subunits form a core ring with 6 small subunits projecting outwards. Adenosylcob(III)alamin serves as cofactor.

It is found in the bacterial microcompartment. It catalyses the reaction ethanolamine = acetaldehyde + NH4(+). Its pathway is amine and polyamine degradation; ethanolamine degradation. Its function is as follows. Catalyzes the deamination of various vicinal amino-alcohols to oxo compounds. Allows this organism to utilize ethanolamine as the sole source of nitrogen and carbon in the presence of external vitamin B12. The polypeptide is Ethanolamine ammonia-lyase small subunit (Listeria monocytogenes serovar 1/2a (strain ATCC BAA-679 / EGD-e)).